The following is a 1313-amino-acid chain: Envelopment polyprotein (1313 aa).

A signal peptide spans 1-17 (MIFTILNVLTRAMLVMS). Residues 18–712 (MYSLTTWDST…HSTLSAILTS (695 aa)) are Lumenal-facing. N-linked (GlcNAc...) asparagine; by host glycans are attached at residues asparagine 76 and asparagine 102. Positions 178-237 (MQVLMSEIEQLKNQLSKKRNERGQEKRDAEKVMSDLMARNSDLRKHNDILTAEISQMKNK) form a coiled coil. Residues 250 to 270 (TVVPAILSVALLSSSVAPIIA) are internal signal sequence for glycoprotein N. 12 disulfides stabilise this stretch: cysteine 303–cysteine 312, cysteine 352–cysteine 362, cysteine 373–cysteine 404, cysteine 394–cysteine 407, cysteine 432–cysteine 579, cysteine 450–cysteine 460, cysteine 501–cysteine 557, cysteine 525–cysteine 536, cysteine 543–cysteine 548, cysteine 602–cysteine 605, cysteine 609–cysteine 679, and cysteine 629–cysteine 634. Asparagine 496 carries an N-linked (GlcNAc...) asparagine; by host glycan. The chain crosses the membrane as a helical span at residues 713–733 (FLLILFIYTVFSVTTNILYVL). Positions 731–773 (YVLRLIPKQLKSPVGWLKLFINWLLTALRIKTRNVMRRINQRI) are golgi retention signal. Residues 734-791 (RLIPKQLKSPVGWLKLFINWLLTALRIKTRNVMRRINQRIGWVDHHDVERPRHREPMR) lie on the Cytoplasmic side of the membrane. The interval 769–773 (INQRI) is important for correct targeting of the glycoproteins to the Golgi complex but not for heterodimerization. Residues 793-809 (FKTTLLLTLIMMTGGNA) are internal signal sequence for glycoprotein C. 12 disulfide bridges follow: cysteine 810-cysteine 850, cysteine 823-cysteine 832, cysteine 875-cysteine 971, cysteine 890-cysteine 1084, cysteine 896-cysteine 944, cysteine 902-cysteine 951, cysteine 907-cysteine 933, cysteine 937-cysteine 942, cysteine 1053-cysteine 1066, cysteine 1148-cysteine 1220, cysteine 1158-cysteine 1161, and cysteine 1168-cysteine 1202. Residues 810–1278 (CSNTVVANSK…LDWLGGPMKA (469 aa)) lie on the Lumenal side of the membrane. Residues 896-902 (CHLVGDC) are fusion loop. Residues 938-949 (GAIGCGCFNINP) form a fusion loop region. Asparagine 1154 carries an N-linked (GlcNAc...) asparagine; by host glycan. Asparagine 1243 carries an N-linked (GlcNAc...) asparagine; by host glycan. A helical transmembrane segment spans residues 1279-1299 (ILKILGFIAIGIVCFVLFMIL). Topologically, residues 1300–1313 (IRIAVNSINIKKKN) are cytoplasmic.

The protein belongs to the phlebovirus envelope glycoprotein family. In terms of assembly, heterodimer with glycoprotein C. Interacts with nucleocapsid protein N and with the polymerase L in order to package them into virus particles. As to quaternary structure, heterodimer with glycoprotein C. Homotrimer (postfusion). Interacts with nucleocapsid protein N and with the polymerase L in order to package them into virus particles. Interacts with host E3 ubiquitin-protein ligase UBR4; this interaction is important for viral RNA production. Post-translationally, specific enzymatic cleavages in vivo yield mature proteins including NSm protein, Glycoprotein C, and Glycoprotein N. In terms of processing, glycosylated. The glycans can attach to host CD209/DC-SIGN, and may play a role in virus entry into dendritic cells. Palmitoylated.

Its subcellular location is the virion membrane. The protein resides in the host Golgi apparatus membrane. It is found in the host endoplasmic reticulum membrane. Its function is as follows. Structural component of the virion that interacts with glycoprotein C. It shields the hydrophobic fusion loops of the glycoprotein C, preventing premature fusion. The glycoprotein protrusions are arranged on an icosahedral lattice, with T=12 triangulation. They are able to attach the virion to the host cell receptor CD209/DC-SIGN and to promote fusion of membranes with the late endosome after endocytosis of the virion. Plays a role in the packaging of ribonucleoproteins and polymerase during virus assembly. Functionally, structural component of the virion that interacts with glycoprotein N. Acts as a class II fusion protein that is activated upon acidification and subsequent repositioning of the glycoprotein N. The glycoprotein protrusions are arranged on an icosahedral lattice, with T=12 triangulation. They are able to attach the virion to the host cell receptor CD209/DC-SIGN and to promote fusion of membranes with the late endosome after endocytosis of the virion. Plays a role for virus dissemination in mosquitoes. In Homo sapiens (Human), this protein is Envelopment polyprotein (GP).